We begin with the raw amino-acid sequence, 539 residues long: Cell division control protein 6 homolog (539 aa).

Residues 1–40 (MPAIAGPSSSPQKHVVGSRSESIGGVRSAEVNTSRKRKLI) are disordered. The short motif at 35 to 38 (RKRK) is the Nuclear localization signal element.

It belongs to the CDC6/cdc18 family. In terms of tissue distribution, highly expressed in roots, flower buds and etiolated seedlings. Expressed in leaves and stems. Highly expressed in proliferating cells such as root meristems, leaf primordia and young growing leaves, as well as cells undergoing endoreduplication cycles.

It localises to the nucleus. Its function is as follows. May be involved in the initiation of DNA replication. May play a role in endoreduplication. Could act as one of the factors that contributes to maintain endoreduplication competence. This Arabidopsis thaliana (Mouse-ear cress) protein is Cell division control protein 6 homolog.